The primary structure comprises 510 residues: GMP synthase [glutamine-hydrolyzing] (510 aa).

The 191-residue stretch at 5-195 folds into the Glutamine amidotransferase type-1 domain; it reads LVLILDFGGQ…LYEVCHCQGD (191 aa). Residue Cys82 is the Nucleophile of the active site. Residues His169 and Glu171 contribute to the active site. The region spanning 196 to 385 is the GMPS ATP-PPase domain; the sequence is WTMENYIEKE…LGVPEEIVWR (190 aa). 223-229 contributes to the ATP binding site; sequence SGGVDSS.

Homodimer.

The catalysed reaction is XMP + L-glutamine + ATP + H2O = GMP + L-glutamate + AMP + diphosphate + 2 H(+). It participates in purine metabolism; GMP biosynthesis; GMP from XMP (L-Gln route): step 1/1. Catalyzes the synthesis of GMP from XMP. The chain is GMP synthase [glutamine-hydrolyzing] from Alkaliphilus metalliredigens (strain QYMF).